Reading from the N-terminus, the 315-residue chain is Ribosomal RNA small subunit methyltransferase H (315 aa).

Residues 32–34, Asp52, Phe78, Asp100, and Gln107 contribute to the S-adenosyl-L-methionine site; that span reads GGH.

It belongs to the methyltransferase superfamily. RsmH family.

The protein resides in the cytoplasm. The catalysed reaction is cytidine(1402) in 16S rRNA + S-adenosyl-L-methionine = N(4)-methylcytidine(1402) in 16S rRNA + S-adenosyl-L-homocysteine + H(+). In terms of biological role, specifically methylates the N4 position of cytidine in position 1402 (C1402) of 16S rRNA. This is Ribosomal RNA small subunit methyltransferase H from Psychromonas ingrahamii (strain DSM 17664 / CCUG 51855 / 37).